The primary structure comprises 352 residues: Alanine racemase (352 aa).

The active-site Proton acceptor; specific for D-alanine is the Lys-33. Lys-33 bears the N6-(pyridoxal phosphate)lysine mark. Arg-129 contributes to the substrate binding site. Tyr-250 (proton acceptor; specific for L-alanine) is an active-site residue. Substrate is bound at residue Met-298.

This sequence belongs to the alanine racemase family. It depends on pyridoxal 5'-phosphate as a cofactor.

The catalysed reaction is L-alanine = D-alanine. It participates in amino-acid biosynthesis; D-alanine biosynthesis; D-alanine from L-alanine: step 1/1. Functionally, catalyzes the interconversion of L-alanine and D-alanine. May also act on other amino acids. The polypeptide is Alanine racemase (alr) (Neisseria meningitidis serogroup B (strain ATCC BAA-335 / MC58)).